Consider the following 599-residue polypeptide: Elongation factor 4 (599 aa).

A tr-type G domain is found at 5-187; the sequence is SHIRNFSIIA…RLVTAIPAPE (183 aa). GTP is bound by residues 17–22 and 134–137; these read DHGKST and NKMD.

This sequence belongs to the TRAFAC class translation factor GTPase superfamily. Classic translation factor GTPase family. LepA subfamily.

The protein localises to the cell inner membrane. It catalyses the reaction GTP + H2O = GDP + phosphate + H(+). In terms of biological role, required for accurate and efficient protein synthesis under certain stress conditions. May act as a fidelity factor of the translation reaction, by catalyzing a one-codon backward translocation of tRNAs on improperly translocated ribosomes. Back-translocation proceeds from a post-translocation (POST) complex to a pre-translocation (PRE) complex, thus giving elongation factor G a second chance to translocate the tRNAs correctly. Binds to ribosomes in a GTP-dependent manner. This chain is Elongation factor 4, found in Pseudomonas aeruginosa (strain LESB58).